The primary structure comprises 802 residues: Phenylalanine--tRNA ligase beta subunit (802 aa).

The tRNA-binding domain maps to 39–154 (AEGLSKLVVG…EDAVPGDSIF (116 aa)). The B5 domain occupies 407–482 (TEPVQVSTSL…RIYGYEKLPT (76 aa)). Mg(2+) is bound by residues aspartate 460, aspartate 466, glutamate 469, and glutamate 470. An FDX-ACB domain is found at 709–802 (TKFPAVSRDI…LTEKVEAEVR (94 aa)).

It belongs to the phenylalanyl-tRNA synthetase beta subunit family. Type 1 subfamily. In terms of assembly, tetramer of two alpha and two beta subunits. It depends on Mg(2+) as a cofactor.

The protein resides in the cytoplasm. The enzyme catalyses tRNA(Phe) + L-phenylalanine + ATP = L-phenylalanyl-tRNA(Phe) + AMP + diphosphate + H(+). This is Phenylalanine--tRNA ligase beta subunit from Streptococcus thermophilus (strain CNRZ 1066).